A 348-amino-acid polypeptide reads, in one-letter code: Phosphate acyltransferase (348 aa).

It belongs to the PlsX family. As to quaternary structure, homodimer. Probably interacts with PlsY.

The protein localises to the cytoplasm. The enzyme catalyses a fatty acyl-[ACP] + phosphate = an acyl phosphate + holo-[ACP]. Its pathway is lipid metabolism; phospholipid metabolism. Functionally, catalyzes the reversible formation of acyl-phosphate (acyl-PO(4)) from acyl-[acyl-carrier-protein] (acyl-ACP). This enzyme utilizes acyl-ACP as fatty acyl donor, but not acyl-CoA. This Rhizobium leguminosarum bv. trifolii (strain WSM2304) protein is Phosphate acyltransferase.